The primary structure comprises 65 residues: Large ribosomal subunit protein bL35 (65 aa).

Belongs to the bacterial ribosomal protein bL35 family.

In Pectobacterium atrosepticum (strain SCRI 1043 / ATCC BAA-672) (Erwinia carotovora subsp. atroseptica), this protein is Large ribosomal subunit protein bL35.